Here is a 276-residue protein sequence, read N- to C-terminus: tRNA (guanine-N(7)-)-methyltransferase (276 aa).

The tract at residues 1-23 (MRPDPAPLDPTDASPAQARRHQP) is disordered. S-adenosyl-L-methionine-binding residues include Glu-103, Glu-128, Asp-155, and Asp-178. The active site involves Asp-178. Substrate contacts are provided by residues Lys-182, Asp-214, and 252 to 255 (TRYE).

It belongs to the class I-like SAM-binding methyltransferase superfamily. TrmB family.

It carries out the reaction guanosine(46) in tRNA + S-adenosyl-L-methionine = N(7)-methylguanosine(46) in tRNA + S-adenosyl-L-homocysteine. Its pathway is tRNA modification; N(7)-methylguanine-tRNA biosynthesis. Functionally, catalyzes the formation of N(7)-methylguanine at position 46 (m7G46) in tRNA. This chain is tRNA (guanine-N(7)-)-methyltransferase, found in Cutibacterium acnes (strain DSM 16379 / KPA171202) (Propionibacterium acnes).